The sequence spans 137 residues: uncharacterized protein (137 aa).

3 consecutive transmembrane segments (helical) span residues 5–25 (ELLW…VLVI), 79–99 (IAAI…WGYY), and 109–129 (FALG…SILW).

Belongs to the MAPEG family.

The protein resides in the cell membrane. This is an uncharacterized protein from Synechocystis sp. (strain ATCC 27184 / PCC 6803 / Kazusa).